Reading from the N-terminus, the 88-residue chain is Transcription factor ILI5 (88 aa).

A bHLH domain is found at 1–54; it reads MSSRRSSRGSISEEEINELISKLQSLLPNSRRRGSSQASTTKLLKETCNYIKSL.

The protein belongs to the bHLH protein family. In terms of assembly, interacts with APG.

The protein resides in the nucleus. In terms of biological role, atypical and probable non DNA-binding bHLH transcription factor that acts as a positive regulator of grain size. Binds the transcription repressor APG and forms a heterodimer of antagonistic basic helix-loop-helix transcription factors that regulates grain length and weight by controlling cell elongation in lemma and palea. This chain is Transcription factor ILI5 (ILI5), found in Oryza sativa subsp. indica (Rice).